The sequence spans 82 residues: DNA-directed RNA polymerase subunit omega (82 aa).

The protein belongs to the RNA polymerase subunit omega family. As to quaternary structure, the RNAP catalytic core consists of 2 alpha, 1 beta, 1 beta' and 1 omega subunit. When a sigma factor is associated with the core the holoenzyme is formed, which can initiate transcription.

The enzyme catalyses RNA(n) + a ribonucleoside 5'-triphosphate = RNA(n+1) + diphosphate. Promotes RNA polymerase assembly. Latches the N- and C-terminal regions of the beta' subunit thereby facilitating its interaction with the beta and alpha subunits. The chain is DNA-directed RNA polymerase subunit omega from Lacticaseibacillus casei (strain BL23) (Lactobacillus casei).